Consider the following 282-residue polypeptide: Bifunctional protein FolD (282 aa).

Residues 164-166 (GRS) and serine 189 contribute to the NADP(+) site.

This sequence belongs to the tetrahydrofolate dehydrogenase/cyclohydrolase family. Homodimer.

The enzyme catalyses (6R)-5,10-methylene-5,6,7,8-tetrahydrofolate + NADP(+) = (6R)-5,10-methenyltetrahydrofolate + NADPH. The catalysed reaction is (6R)-5,10-methenyltetrahydrofolate + H2O = (6R)-10-formyltetrahydrofolate + H(+). It functions in the pathway one-carbon metabolism; tetrahydrofolate interconversion. In terms of biological role, catalyzes the oxidation of 5,10-methylenetetrahydrofolate to 5,10-methenyltetrahydrofolate and then the hydrolysis of 5,10-methenyltetrahydrofolate to 10-formyltetrahydrofolate. This Lactobacillus gasseri (strain ATCC 33323 / DSM 20243 / BCRC 14619 / CIP 102991 / JCM 1131 / KCTC 3163 / NCIMB 11718 / NCTC 13722 / AM63) protein is Bifunctional protein FolD.